A 270-amino-acid chain; its full sequence is Transmembrane protein 176B (270 aa).

The next 4 helical transmembrane spans lie at 65–85 (LALG…GVCL), 95–115 (ASGC…GAIV), 127–147 (ISSL…VLCV), and 209–229 (LFLA…GVGL). Phosphoserine occurs at positions 236, 245, 254, and 258. The tract at residues 237 to 270 (SQPLNEEGSEKRLLGENSVPPSPSREQTSTAIVL) is disordered. Positions 260-270 (SREQTSTAIVL) are enriched in polar residues.

This sequence belongs to the TMEM176 family. As to expression, expressed in lung and dermal fibroblasts.

It is found in the nucleus membrane. In terms of biological role, may play a role in the process of maturation of dendritic cells. Required for the development of cerebellar granule cells. This Homo sapiens (Human) protein is Transmembrane protein 176B (TMEM176B).